The following is a 186-amino-acid chain: Putative glutathione-dependent formaldehyde-activating enzyme (186 aa).

The CENP-V/GFA domain maps to phenylalanine 20–aspartate 166. Residues cysteine 27, cysteine 29, cysteine 48, cysteine 50, cysteine 53, cysteine 95, and cysteine 98 each contribute to the Zn(2+) site.

Belongs to the Gfa family. It depends on Zn(2+) as a cofactor.

It catalyses the reaction S-(hydroxymethyl)glutathione = glutathione + formaldehyde. Its pathway is one-carbon metabolism; formaldehyde degradation; formate from formaldehyde (glutathione route): step 1/3. Functionally, catalyzes the condensation of formaldehyde and glutathione to S-hydroxymethylglutathione. In Fusarium vanettenii (strain ATCC MYA-4622 / CBS 123669 / FGSC 9596 / NRRL 45880 / 77-13-4) (Fusarium solani subsp. pisi), this protein is Putative glutathione-dependent formaldehyde-activating enzyme.